The following is a 559-amino-acid chain: Phenylalanine--tRNA ligase beta subunit (559 aa).

The region spanning 274–350 (FEPKIIDVHT…LGYGFNELPA (77 aa)) is the B5 domain. 4 residues coordinate Mg(2+): aspartate 328, aspartate 334, glutamate 337, and asparagine 338.

Belongs to the phenylalanyl-tRNA synthetase beta subunit family. Type 2 subfamily. Tetramer of two alpha and two beta subunits. The cofactor is Mg(2+).

It is found in the cytoplasm. It carries out the reaction tRNA(Phe) + L-phenylalanine + ATP = L-phenylalanyl-tRNA(Phe) + AMP + diphosphate + H(+). The polypeptide is Phenylalanine--tRNA ligase beta subunit (Methanosphaera stadtmanae (strain ATCC 43021 / DSM 3091 / JCM 11832 / MCB-3)).